A 90-amino-acid chain; its full sequence is Elongation factor 1-beta (90 aa).

It belongs to the EF-1-beta/EF-1-delta family.

Promotes the exchange of GDP for GTP in EF-1-alpha/GDP, thus allowing the regeneration of EF-1-alpha/GTP that could then be used to form the ternary complex EF-1-alpha/GTP/AAtRNA. The sequence is that of Elongation factor 1-beta (ef1b) from Aeropyrum pernix (strain ATCC 700893 / DSM 11879 / JCM 9820 / NBRC 100138 / K1).